Consider the following 269-residue polypeptide: RBPJ-interacting and tubulin-associated protein 1 (269 aa).

Residues 5 to 17 (VELAISGMQTLHV) carry the Nuclear export signal motif. 2 disordered regions span residues 67–94 (GTGV…TLTP) and 145–269 (PATP…PPWK). A compositionally biased stretch (low complexity) spans 79 to 93 (SCESTSSSGSTPTLT). Residues 92–108 (LTPRKKNKYRLISHTPS) carry the Nuclear localization signal motif. The interaction with RBPJ/RBPSUH stretch occupies residues 128–156 (WMARGDAAKLHALFWTPPATPRGSHSPRP). Residues 156 to 269 (PRETPVRCVH…ATQKTKPPWK (114 aa)) form an interaction with tubulin region. Composition is skewed to polar residues over residues 202–220 (LTHP…SPCT) and 247–269 (VSVS…PPWK).

Belongs to the RITA family. In terms of assembly, interacts with RBPJ/RBPSUH.

It localises to the cytoplasm. Its subcellular location is the nucleus. It is found in the cytoskeleton. The protein resides in the microtubule organizing center. The protein localises to the centrosome. Its function is as follows. Tubulin-binding protein that acts as a negative regulator of Notch signaling pathway. Shuttles between the cytoplasm and the nucleus and mediates the nuclear export of RBPJ/RBPSUH, thereby preventing the interaction between RBPJ/RBPSUH and NICD product of Notch proteins (Notch intracellular domain), leading to down-regulate Notch-mediated transcription. May play a role in neurogenesis. In Bos taurus (Bovine), this protein is RBPJ-interacting and tubulin-associated protein 1 (RITA1).